Consider the following 397-residue polypeptide: uncharacterized protein (397 aa).

Helical transmembrane passes span 1 to 21 (MGASGLVWTLTIVLIAGLMLV), 39 to 59 (VIQSATFVGIAILFGIAVVVF), 76 to 96 (EALSVDNLFVFLVIISSFGVP), 103 to 123 (VLLFGIAFALVTRTGFIFVGA), 124 to 144 (ALIENFNSAFYLFGLVLLVMA), 194 to 214 (MMTPLLLVMIAVGGTDILFAF), 219 to 239 (ALFGLTQNVYLVFAATAFSLL), 255 to 275 (LVYLSYGLAVILGFIGVKLML), and 301 to 321 (QSLTVIIIVLLITTAASFWSA).

It belongs to the TerC family.

It localises to the cell membrane. This is an uncharacterized protein from Mycobacterium tuberculosis (strain CDC 1551 / Oshkosh).